Reading from the N-terminus, the 454-residue chain is tRNA modification GTPase MnmE (454 aa).

The (6S)-5-formyl-5,6,7,8-tetrahydrofolate site is built by Arg23, Glu80, and Lys120. Residues 216–377 form the TrmE-type G domain; sequence GMKVVIAGRP…LRNHLKQSMG (162 aa). Asn226 lines the K(+) pocket. GTP is bound by residues 226–231, 245–251, 270–273, 335–338, and 358–360; these read NAGKSS, TDIAGTT, DTAG, NKAD, and SAR. A Mg(2+)-binding site is contributed by Ser230. 3 residues coordinate K(+): Thr245, Ile247, and Thr250. Thr251 serves as a coordination point for Mg(2+). Residue Lys454 participates in (6S)-5-formyl-5,6,7,8-tetrahydrofolate binding.

Belongs to the TRAFAC class TrmE-Era-EngA-EngB-Septin-like GTPase superfamily. TrmE GTPase family. In terms of assembly, homodimer. Heterotetramer of two MnmE and two MnmG subunits. It depends on K(+) as a cofactor.

The protein resides in the cytoplasm. Exhibits a very high intrinsic GTPase hydrolysis rate. Involved in the addition of a carboxymethylaminomethyl (cmnm) group at the wobble position (U34) of certain tRNAs, forming tRNA-cmnm(5)s(2)U34. This chain is tRNA modification GTPase MnmE, found in Salmonella typhimurium (strain LT2 / SGSC1412 / ATCC 700720).